A 232-amino-acid chain; its full sequence is Ion-translocating oxidoreductase complex subunit E (232 aa).

6 helical membrane-spanning segments follow: residues 18–38 (GLVQ…LTNA), 39–59 (LGLG…VSLV), 69–89 (IPVF…LINA), 93–113 (GLYL…IIIG), 127–147 (AAFD…VLGA), and 182–202 (PFLL…LIAL).

It belongs to the NqrDE/RnfAE family. As to quaternary structure, the complex is composed of six subunits: RnfA, RnfB, RnfC, RnfD, RnfE and RnfG.

The protein localises to the cell inner membrane. Functionally, part of a membrane-bound complex that couples electron transfer with translocation of ions across the membrane. This Shewanella sp. (strain ANA-3) protein is Ion-translocating oxidoreductase complex subunit E.